A 391-amino-acid polypeptide reads, in one-letter code: Elongation factor Tu (391 aa).

Positions 10-201 (KPHVNIGTIG…QVDAYIPTPV (192 aa)) constitute a tr-type G domain. The G1 stretch occupies residues 19–26 (GHVDHGKT). Residue 19-26 (GHVDHGKT) coordinates GTP. Threonine 26 contributes to the Mg(2+) binding site. The segment at 55-59 (GITIS) is G2. Positions 76-79 (DCPG) are G3. GTP contacts are provided by residues 76 to 80 (DCPGH) and 131 to 134 (NKVD). Positions 131–134 (NKVD) are G4. A G5 region spans residues 169 to 171 (SAL).

The protein belongs to the TRAFAC class translation factor GTPase superfamily. Classic translation factor GTPase family. EF-Tu/EF-1A subfamily. In terms of assembly, monomer.

It is found in the cytoplasm. The enzyme catalyses GTP + H2O = GDP + phosphate + H(+). Functionally, GTP hydrolase that promotes the GTP-dependent binding of aminoacyl-tRNA to the A-site of ribosomes during protein biosynthesis. The sequence is that of Elongation factor Tu from Mesorhizobium japonicum (strain LMG 29417 / CECT 9101 / MAFF 303099) (Mesorhizobium loti (strain MAFF 303099)).